A 307-amino-acid polypeptide reads, in one-letter code: Follistatin-related protein 1 (307 aa).

Residues 1-19 (MMWRRWLALALVAVAWVHA) form the signal peptide. The Follistatin-like domain maps to 29–52 (ICANVFCGAGRECAVTEKGEPTCL). 5 disulfide bridges follow: cysteine 30/cysteine 41, cysteine 35/cysteine 51, cysteine 53/cysteine 83, cysteine 57/cysteine 76, and cysteine 65/cysteine 97. Residues 47–99 (GEPTCLCIEQCKPHKRPVCGSNGKTYLNHCELHRDACLTGSKIQVDYDGHCKE) enclose the Kazal-like domain. Asparagine 143 carries N-linked (GlcNAc...) asparagine glycosylation. One can recognise an EF-hand 1 domain in the interval 143 to 177 (NYSEILDKYFKNFDNGDSRLDSSEFLKFVEQNETA). At serine 164 the chain carries Phosphoserine. Residues asparagine 174 and asparagine 179 are each glycosylated (N-linked (GlcNAc...) asparagine). Residues 192–227 (LRGLCVDALIELSDENADWKLSFQEFLKCLNPSFNP) enclose the EF-hand 2 domain. Residues 232–286 (CALEDETYADGAETEVDCNRCVCACGNWVCTAMTCDGKNQKGAQTQAEEEMTRYV) enclose the VWFC domain.

In terms of assembly, homodimer. Interacts with SCN10A. Interacts with DIP2A; DIP2A may act as a cell surface receptor for FSTL1. Interacts with BMP4. Interacts with CD14; this interaction promotes TL4-mediated signaling cascade.

It localises to the secreted. Functionally, secreted glycoprotein that is involved in various physiological processes, such as angiogenesis, regulation of the immune response, cell proliferation and differentiation. Plays a role in the development of the central nervous system, skeletal system, lungs, and ureter. Promotes endothelial cell survival, migration and differentiation into network structures in an AKT-dependent manner. Also promotes survival of cardiac myocytes. Initiates various signaling cascades by activating different receptors on the cell surface such as DIP2A, TLR4 or BMP receptors. The protein is Follistatin-related protein 1 (FSTL1) of Bos taurus (Bovine).